We begin with the raw amino-acid sequence, 439 residues long: Enolase 1-1 (439 aa).

The residue at position 85 (threonine 85) is a Phosphothreonine. Substrate-binding residues include histidine 159 and glutamate 168. Glutamate 211 serves as the catalytic Proton donor. Aspartate 246 is a binding site for Mg(2+). Phosphoserine occurs at positions 249 and 250. The residue at position 253 (tyrosine 253) is a Phosphotyrosine. Substrate is bound by residues glutamate 295 and aspartate 320. Mg(2+)-binding residues include glutamate 295 and aspartate 320. Residue lysine 345 is the Proton acceptor of the active site. Serine 351 bears the Phosphoserine mark. A Phosphothreonine modification is found at threonine 353. Serine 355 is subject to Phosphoserine. Residues 372–375 (SHRS) and lysine 396 each bind substrate. Position 421 is a phosphoserine (serine 421).

The protein belongs to the enolase family. Homodimer. Requires Mg(2+) as cofactor.

It localises to the cytoplasm. The enzyme catalyses (2R)-2-phosphoglycerate = phosphoenolpyruvate + H2O. It functions in the pathway carbohydrate degradation; glycolysis; pyruvate from D-glyceraldehyde 3-phosphate: step 4/5. This chain is Enolase 1-1 (eno101), found in Schizosaccharomyces pombe (strain 972 / ATCC 24843) (Fission yeast).